We begin with the raw amino-acid sequence, 644 residues long: Acetyl-coenzyme A synthetase (644 aa).

Residues 190–193 and Thr-308 each bind CoA; that span reads RGSK. ATP is bound by residues 384–386, 408–413, Asp-497, and Arg-512; these read GEP and DTWWQT. Ser-520 contacts CoA. ATP is bound at residue Arg-523. Mg(2+)-binding residues include Val-534, His-536, and Val-539. Residue Arg-581 participates in CoA binding. Position 606 is an N6-acetyllysine (Lys-606).

The protein belongs to the ATP-dependent AMP-binding enzyme family. The cofactor is Mg(2+). In terms of processing, acetylated. Deacetylation by the SIR2-homolog deacetylase activates the enzyme.

The enzyme catalyses acetate + ATP + CoA = acetyl-CoA + AMP + diphosphate. Catalyzes the conversion of acetate into acetyl-CoA (AcCoA), an essential intermediate at the junction of anabolic and catabolic pathways. AcsA undergoes a two-step reaction. In the first half reaction, AcsA combines acetate with ATP to form acetyl-adenylate (AcAMP) intermediate. In the second half reaction, it can then transfer the acetyl group from AcAMP to the sulfhydryl group of CoA, forming the product AcCoA. The sequence is that of Acetyl-coenzyme A synthetase from Magnetococcus marinus (strain ATCC BAA-1437 / JCM 17883 / MC-1).